Consider the following 291-residue polypeptide: 4-hydroxy-tetrahydrodipicolinate synthase (291 aa).

Threonine 47 provides a ligand contact to pyruvate. Tyrosine 134 acts as the Proton donor/acceptor in catalysis. Catalysis depends on lysine 162, which acts as the Schiff-base intermediate with substrate. Position 205 (isoleucine 205) interacts with pyruvate.

This sequence belongs to the DapA family. As to quaternary structure, homotetramer; dimer of dimers.

It is found in the cytoplasm. It carries out the reaction L-aspartate 4-semialdehyde + pyruvate = (2S,4S)-4-hydroxy-2,3,4,5-tetrahydrodipicolinate + H2O + H(+). The protein operates within amino-acid biosynthesis; L-lysine biosynthesis via DAP pathway; (S)-tetrahydrodipicolinate from L-aspartate: step 3/4. In terms of biological role, catalyzes the condensation of (S)-aspartate-beta-semialdehyde [(S)-ASA] and pyruvate to 4-hydroxy-tetrahydrodipicolinate (HTPA). In Methanosphaerula palustris (strain ATCC BAA-1556 / DSM 19958 / E1-9c), this protein is 4-hydroxy-tetrahydrodipicolinate synthase.